A 488-amino-acid chain; its full sequence is V-type proton ATPase subunit B 1 (488 aa).

It belongs to the ATPase alpha/beta chains family. As to quaternary structure, V-ATPase is a heteromultimeric enzyme composed of a peripheral catalytic V1 complex (main components: subunits A, B, C, D, E, and F) attached to an integral membrane V0 proton pore complex (main component: the proteolipid protein).

Non-catalytic subunit of the peripheral V1 complex of vacuolar ATPase. V-ATPase is responsible for acidifying a variety of intracellular compartments in eukaryotic cells. The sequence is that of V-type proton ATPase subunit B 1 from Gossypium hirsutum (Upland cotton).